Reading from the N-terminus, the 374-residue chain is Alanine racemase (374 aa).

Residue K35 is the Proton acceptor; specific for D-alanine of the active site. Residue K35 is modified to N6-(pyridoxal phosphate)lysine. A substrate-binding site is contributed by R133. The active-site Proton acceptor; specific for L-alanine is the Y261. Substrate is bound at residue M315.

Belongs to the alanine racemase family. Pyridoxal 5'-phosphate serves as cofactor.

The catalysed reaction is L-alanine = D-alanine. The protein operates within amino-acid biosynthesis; D-alanine biosynthesis; D-alanine from L-alanine: step 1/1. Functionally, catalyzes the interconversion of L-alanine and D-alanine. May also act on other amino acids. This Psychrobacter sp. (strain PRwf-1) protein is Alanine racemase (alr).